The chain runs to 275 residues: MSAPVTRKRLTPKVIQAMKGECPIVSLTAYTTPVARLLDPHCDLLLVGDSLGMVLYGMESTLAVTLDMMIMHGQAVMRGTSHACVIVDMPFGSYQESKEQAFRNAARVMQETGCDGVKLEGGEEMAETVAFLVRRGIPVFGHVGLMPQQVNTVGGFRSLGRGDDEAGKIRRDAQAIAQAGAFAVVIEGTVEPLAREITALIDIPTVGIGASSACDGQVLVSDDMLGLFQDFTPRFVKRFAHLAPQVSQAAEAYAEEVRARRFPGPEHVFGAKPGA.

Mg(2+)-binding residues include D49 and D88. 3-methyl-2-oxobutanoate-binding positions include 49–50 (DS), D88, and K118. E120 serves as a coordination point for Mg(2+). E187 serves as the catalytic Proton acceptor.

This sequence belongs to the PanB family. In terms of assembly, homodecamer; pentamer of dimers. Requires Mg(2+) as cofactor.

It is found in the cytoplasm. The catalysed reaction is 3-methyl-2-oxobutanoate + (6R)-5,10-methylene-5,6,7,8-tetrahydrofolate + H2O = 2-dehydropantoate + (6S)-5,6,7,8-tetrahydrofolate. It functions in the pathway cofactor biosynthesis; (R)-pantothenate biosynthesis; (R)-pantoate from 3-methyl-2-oxobutanoate: step 1/2. Catalyzes the reversible reaction in which hydroxymethyl group from 5,10-methylenetetrahydrofolate is transferred onto alpha-ketoisovalerate to form ketopantoate. The sequence is that of 3-methyl-2-oxobutanoate hydroxymethyltransferase from Brucella melitensis biotype 1 (strain ATCC 23456 / CCUG 17765 / NCTC 10094 / 16M).